The sequence spans 487 residues: Betaine aldehyde dehydrogenase (487 aa).

K(+) is bound by residues Ile-27 and Asp-93. Residue 149–151 coordinates NAD(+); it reads GAW. Catalysis depends on Lys-161, which acts as the Charge relay system. NAD(+) contacts are provided by residues 175–178 and 228–231; these read KPSE and SVPT. A K(+)-binding site is contributed by Leu-243. The Proton acceptor role is filled by Glu-249. 3 residues coordinate NAD(+): Gly-251, Cys-283, and Glu-384. The active-site Nucleophile is Cys-283. Cysteine sulfenic acid (-SOH) is present on Cys-283. The K(+) site is built by Lys-454 and Gly-457. Glu-461 serves as the catalytic Charge relay system.

It belongs to the aldehyde dehydrogenase family. As to quaternary structure, dimer of dimers. It depends on K(+) as a cofactor.

The enzyme catalyses betaine aldehyde + NAD(+) + H2O = glycine betaine + NADH + 2 H(+). Its pathway is amine and polyamine biosynthesis; betaine biosynthesis via choline pathway; betaine from betaine aldehyde: step 1/1. Involved in the biosynthesis of the osmoprotectant glycine betaine. Catalyzes the irreversible oxidation of betaine aldehyde to the corresponding acid. This Brucella melitensis biotype 2 (strain ATCC 23457) protein is Betaine aldehyde dehydrogenase.